Here is a 343-residue protein sequence, read N- to C-terminus: Transcription factor BPE (343 aa).

Residues glutamine 142–leucine 192 form the bHLH domain.

As to quaternary structure, homodimer. In terms of tissue distribution, specifically expressed in flowers, mostly in petals, inflorescence and flower buds. Expressed ubiquitously (leaves, flowers and stems).

The protein resides in the nucleus. Functionally, involved in the control of petal size, by interfering with postmitotic cell expansion to limit final petal cell size. This is Transcription factor BPE (BPE) from Arabidopsis thaliana (Mouse-ear cress).